We begin with the raw amino-acid sequence, 618 residues long: Polyamine transporter TPO5 (618 aa).

The Cytoplasmic portion of the chain corresponds to 1–60 (MPEYTLLADNIRENIVHFDPNGLFDNLHTIVHEDDSQENEEAEHFNYDQVLDKSLLSRGS). Residues 61–84 (IVGLGLGLMSPVLGMCTSMAIGLI) traverse the membrane as a helical segment. Over 85 to 90 (NGGPLT) the chain is Extracellular. Residues 91–110 (IMLGFLISGVCIWFSSLSLG) traverse the membrane as a helical segment. The Cytoplasmic portion of the chain corresponds to 111 to 131 (EIVSKFPMELHVGSAMLAPEK). A helical membrane pass occupies residues 132–148 (LKLVCSWYTGWLMLIGN). Residues 149 to 154 (WTMSTS) are Extracellular-facing. Residues 155-171 (ITFAGAQLTISLILMTN) form a helical membrane-spanning segment. At 172–179 (SNLISEAH) the chain is on the cytoplasmic side. Residues 180–200 (LIFYTVIVFYLVVTVVGLVNL) form a helical membrane-spanning segment. The Extracellular segment spans residues 201–211 (KFARFIETINK). Residues 212–231 (VCVYWIIYAIIFIDILLLVF) traverse the membrane as a helical segment. Residues 232 to 297 (HKGKFRSLKY…EKDIPRGMSN (66 aa)) are Cytoplasmic-facing. The helical transmembrane segment at 298–317 (AVLLSAFSGVIFLIPIMLIL) threads the bilayer. Residues 318–342 (PDNDLLFTNHKVLPIVNIFTKSTDS) are Extracellular-facing. The chain crosses the membrane as a helical span at residues 343-367 (VVLSFFLVLLILGNLLFSGIGSITT). The Cytoplasmic portion of the chain corresponds to 368–402 (SSRAVYSFSRDQAIPYYDKWTYVEPDSQSKVPKNS). A helical membrane pass occupies residues 403-419 (VVLSMIISYFLGLLALI). At 420–425 (STAAFN) the chain is on the extracellular side. A helical transmembrane segment spans residues 426–449 (AFIGAAVLCLCSATFIPLVLVLFT). At 450–464 (RRRAIRSAPVKIRYK) the chain is on the cytoplasmic side. The chain crosses the membrane as a helical span at residues 465–486 (FGWFINIVSIVWLLLSMVSVCL). Residues 487 to 498 (PTQVPVTFKTMN) lie on the Extracellular side of the membrane. A helical transmembrane segment spans residues 499-516 (YALMVYVFCILVITGLYF). At 517-618 (KWGKYNFRLP…DLADDRRYDI (102 aa)) the chain is on the cytoplasmic side. S569 is subject to Phosphoserine. A disordered region spans residues 576-618 (VHPKSSTENPFEENEENVITDYGDEHHTAEQEFDLADDRRYDI). Residues 598-618 (GDEHHTAEQEFDLADDRRYDI) show a composition bias toward basic and acidic residues.

This sequence belongs to the amino acid-polyamine-organocation (APC) superfamily.

It localises to the golgi apparatus membrane. Functionally, required for polyamine transport. Transports putrescine effectively and spermidine less effectively. The protein is Polyamine transporter TPO5 (TPO5) of Saccharomyces cerevisiae (strain ATCC 204508 / S288c) (Baker's yeast).